A 906-amino-acid chain; its full sequence is NACHT, LRR and PYD domains-containing protein 1b allele 4 (906 aa).

The tract at residues 1 to 22 is disordered; sequence MEESPPKQKSNTKVAQHEGQQD. The region spanning 126–435 is the NACHT domain; sequence QLVIIEGAAG…EFFAAISCIL (310 aa). ATP is bound at residue 132–139; it reads GAAGIGKS. LRR repeat units follow at residues 627-647 and 684-704; these read NLEGLDLSGNSLRYSVVQSLC and SLTELYLQLNDLGDDGVRMLC. The 118-residue stretch at 789-906 folds into the FIIND (incomplete) domain; the sequence is FWGPTGPVAT…FQEHGSRNAR (118 aa).

It belongs to the NLRP family. As to expression, expressed in macrophages.

The protein resides in the cytoplasm. It is found in the cytosol. Its function is as follows. Probable inactive allele of Nlrp1b, which lacks a CARD domain, suggesting that it is not able to form an inflammasome. Contrary to Nlrp1b allele 1, allele 4 is not activated by B.anthracis lethal toxin and no other activation signal is reported. The protein is NACHT, LRR and PYD domains-containing protein 1b allele 4 of Mus musculus (Mouse).